The primary structure comprises 546 residues: UDP-glycosyltransferase FPY2 (546 aa).

A signal peptide spans 1–20 (MSLPKAQILVVVTVGGSTNS). The helical transmembrane segment at 517 to 537 (LNNIDVALLFFILLGIISWIT) threads the bilayer.

This sequence belongs to the glycosyltransferase 28 family.

It is found in the membrane. The protein operates within secondary metabolite biosynthesis. UDP-glycosyltransferase; part of the gene cluster that mediates the biosynthesis of the gamma-pyrones fusapyrone (FPY) and deoxyfusapyrone (dFPY). FPY is an undecaketide and thus likely synthesized by the polyketide synthase FPY1 from acetyl-CoA functioning as starter unit and the addition of 10 malonyl-CoA extender units by successive Claisen-condensations. Next to this, FPY shares some rare features: C-glycosylated 4-deoxyglucose at C-3, a gem-dimethyl group at C-13, and an alpha-beta to beta-gamma double bond shift at C-20. During FPY biosynthesis mono-C-methyl groups are transferred to the tetra-, penta-, hexa- and heptaketide, while two C-methyl groups are transferred to the nonaketide, suggesting that the CMet domain is programmed to selectively catalyze two successive C-alpha-methylation reactions of the nonaketide, while other alpha-carbons are non- or mono-methylated only. While the origin of the 4'-deoxyglucose moiety remains opaque, its transfer to C-3 is most likely mediated by the C-glycosyltransferase FPY2. Next to this, the hydroxyl group present at C-33 and discriminating between FPY and dFPY, is likely to be installed by the cytochrome P450 monooxygenase FPY7. No putative function can be predicted for the remaining genes FPY3-FPY6. This is UDP-glycosyltransferase FPY2 from Fusarium mangiferae (Mango malformation disease fungus).